Reading from the N-terminus, the 528-residue chain is Inorganic phosphate transporter 1-2 (528 aa).

Topologically, residues 1 to 24 (MAGSQLNVLVKLDQAKTQWYHFMA) are cytoplasmic. Residues 25 to 45 (IVIAGMGFFTDAYDLFCIALV) traverse the membrane as a helical segment. At 46-71 (TKLLGRLYYTDITKPNPGTLPPNVSS) the chain is on the extracellular side. A helical membrane pass occupies residues 72 to 92 (AVTGVALCGTLAGQLFFGWLG). At 93–99 (DKLGRKS) the chain is on the cytoplasmic side. A helical membrane pass occupies residues 100–120 (VYGFTLILMVVCSIASGLSFG). Over 121 to 125 (HTPKS) the chain is Extracellular. A helical transmembrane segment spans residues 126–146 (VIATLCFFRFWLGFGIGGDYP). Residues 147-163 (LSATIMSEYASKKTRGA) lie on the Cytoplasmic side of the membrane. Residues 164–184 (FIAAVFAMQGFGILFGAIVAL) traverse the membrane as a helical segment. Residues 185 to 212 (VVSAGFRHAYPAPSYAQNPAASLAPQAD) lie on the Extracellular side of the membrane. Residues 213-232 (YTWRLILMFGTIPAGLTYYW) traverse the membrane as a helical segment. Over 233 to 296 (RMKMPETARY…RQFMKRHGMH (64 aa)) the chain is Cytoplasmic. A helical membrane pass occupies residues 297–317 (LLATTSTWFLLDIAFYSQNLF). Residues 318-348 (QKDIFSKVGWIPPAKTMNALEELYRISRAQA) are Extracellular-facing. The helical transmembrane segment at 349 to 369 (LIALCGTIPGYWFTVAFIDIV) threads the bilayer. Residues 370–371 (GR) are Cytoplasmic-facing. Residues 372–392 (FWIQIMGFFMMTVFMLALGVP) traverse the membrane as a helical segment. At 393-405 (YDHWTHPAHHTGF) the chain is on the extracellular side. A helical membrane pass occupies residues 406–426 (VVLYALTFFFANFGPNSTTFI). Topologically, residues 427–442 (VPAEIFPARLRSTCHG) are cytoplasmic. A helical membrane pass occupies residues 443–463 (ISAASGKAGAIIGAFGFLYAA). Residues 464–481 (QDQHNPDAGYSRGIGIRN) lie on the Extracellular side of the membrane. Residues 482 to 502 (ALFVLAGTNFLGMLMTLLVPE) form a helical membrane-spanning segment. The Cytoplasmic portion of the chain corresponds to 503-528 (SKGLSLEEMSKDNVVDETAQEAIAQA).

Belongs to the major facilitator superfamily. Phosphate:H(+) symporter (TC 2.A.1.9) family. In terms of tissue distribution, expressed in the root stele and leaf phloem and xylem.

The protein resides in the membrane. In terms of biological role, low-affinity transporter for inorganic phosphate (Pi). Involved in internal Pi transport from root to shoot. Responsible for most of the PHR2-mediated accumulation of excess shoot Pi under abundant Pi conditions, but not for PHO2-mediated accumulation of excess shoot Pi. Acts as a H(+):phosphate symporter. The chain is Inorganic phosphate transporter 1-2 (PTH1-2) from Oryza sativa subsp. japonica (Rice).